We begin with the raw amino-acid sequence, 306 residues long: Nod factor export ATP-binding protein I (306 aa).

The ABC transporter domain occupies 8–238 (IDLVGVRKSF…HIGCNVIEIY (231 aa)). Residue 40-47 (GPNGAGKS) coordinates ATP.

It belongs to the ABC transporter superfamily. Lipooligosaccharide exporter (TC 3.A.1.102) family. In terms of assembly, the complex is composed of two ATP-binding proteins (NodI) and two transmembrane proteins (NodJ).

It is found in the cell inner membrane. Part of the ABC transporter complex NodIJ involved in the export of the nodulation factors (Nod factors), the bacterial signal molecules that induce symbiosis and subsequent nodulation induction. Nod factors are LCO (lipo-chitin oligosaccharide), a modified beta-1,4-linked N-acetylglucosamine oligosaccharide. This subunit is responsible for energy coupling to the transport system. The chain is Nod factor export ATP-binding protein I from Bradyrhizobium diazoefficiens (strain JCM 10833 / BCRC 13528 / IAM 13628 / NBRC 14792 / USDA 110).